A 507-amino-acid polypeptide reads, in one-letter code: ATP synthase subunit alpha (507 aa).

169–176 (GDRQIGKT) contributes to the ATP binding site.

Belongs to the ATPase alpha/beta chains family. F-type ATPases have 2 components, CF(1) - the catalytic core - and CF(0) - the membrane proton channel. CF(1) has five subunits: alpha(3), beta(3), gamma(1), delta(1), epsilon(1). CF(0) has three main subunits: a(1), b(2) and c(9-12). The alpha and beta chains form an alternating ring which encloses part of the gamma chain. CF(1) is attached to CF(0) by a central stalk formed by the gamma and epsilon chains, while a peripheral stalk is formed by the delta and b chains.

It localises to the cell inner membrane. The enzyme catalyses ATP + H2O + 4 H(+)(in) = ADP + phosphate + 5 H(+)(out). In terms of biological role, produces ATP from ADP in the presence of a proton gradient across the membrane. The alpha chain is a regulatory subunit. This is ATP synthase subunit alpha from Desulfotalea psychrophila (strain LSv54 / DSM 12343).